The following is a 306-amino-acid chain: UDP-3-O-acyl-N-acetylglucosamine deacetylase (306 aa).

3 residues coordinate Zn(2+): H79, H239, and D243. The active-site Proton donor is the H266.

Belongs to the LpxC family. Requires Zn(2+) as cofactor.

It catalyses the reaction a UDP-3-O-[(3R)-3-hydroxyacyl]-N-acetyl-alpha-D-glucosamine + H2O = a UDP-3-O-[(3R)-3-hydroxyacyl]-alpha-D-glucosamine + acetate. The protein operates within glycolipid biosynthesis; lipid IV(A) biosynthesis; lipid IV(A) from (3R)-3-hydroxytetradecanoyl-[acyl-carrier-protein] and UDP-N-acetyl-alpha-D-glucosamine: step 2/6. Its function is as follows. Catalyzes the hydrolysis of UDP-3-O-myristoyl-N-acetylglucosamine to form UDP-3-O-myristoylglucosamine and acetate, the committed step in lipid A biosynthesis. The protein is UDP-3-O-acyl-N-acetylglucosamine deacetylase of Glaesserella parasuis serovar 5 (strain SH0165) (Haemophilus parasuis).